The chain runs to 378 residues: Putative F-box protein At4g17565 (378 aa).

The F-box domain occupies 16–63 (PKWSELCPDLLRSIFEQLSFTNLNRAKLVCRSWNSASRGCVPKRNQIP).

The sequence is that of Putative F-box protein At4g17565 from Arabidopsis thaliana (Mouse-ear cress).